The chain runs to 468 residues: MFSITTLRDWTPDPGSIICWHASPTAKAKARQAPISEVPPSYQQAQHLRRYRDHVARGLDMSRLMIFTWDLPGRCNIRAMNYAINAHLRRHDTYHSWFEFDNAEHIVRHTIADPADIEVVQAEHQNMTSAELRHHIATPQPLQWDCFLFGIIQSDDHFTFYASIAHLCVDPMIVGVLFIEIHMMYSALVGGDPPIELPPAGRYDDHCVRQYADTAALTLDSARVRRWVEFAANNDGTLPHFPLPLGDLSVPHTGKLLTETLMDEQQGERFEAACVAAGARFSGGVFACAALAERELTNCETFDVVTTTDTRRTPTELRTTGWFTGLVPITVPVASGLFDSAARVAQISFDSGKDLATVPFDRVLELARPETGLRPPRPGNFVMSFLDASIAPLSTVANSDLNFRIYDEGRVSHQVSMWVNRYQHQTTVTVLFPDNPIASESVANYIAAMKSIYIRTADGTLAILKPGT.

This sequence belongs to the PapA acyltransferase family.

It catalyses the reaction 2-O-sulfo-alpha,alpha-trehalose + hexadecanoyl-CoA = 2-O-sulfo-2'-O-hexadecanoyl-alpha,alpha-trehalose + CoA. Its function is as follows. Required for the biosynthesis of sulfolipid-1 (SL-1), a major mycobacterial cell wall lipid. Catalyzes the acylation of trehalose-2-sulfate by adding the palmitoyl group at the 2'-position to yield the intermediate trehalose-2-sulfate-2'-palmitate (SL659). This is Trehalose-2-sulfate acyltransferase PapA2 (papA2) from Mycobacterium bovis (strain ATCC BAA-935 / AF2122/97).